A 135-amino-acid polypeptide reads, in one-letter code: MAGRGKAIGAGAAKKATSRSSKAGLQFPVGRIARFLKAGKYAERVGAGAPVYLAAVLEYLAAEVLELAGNAARDNKKTRIVPRHIQLAVRNDEELTKLLGGATIASGGVMPNIHQHLLPKKASSSKVSTVDDDDN.

Belongs to the histone H2A family. As to quaternary structure, the nucleosome is a histone octamer containing two molecules each of H2A, H2B, H3 and H4 assembled in one H3-H4 heterotetramer and two H2A-H2B heterodimers. The octamer wraps approximately 147 bp of DNA. As to expression, expressed preferentially in meristematic tissues of young seedlings, in stigma and ovary but not in pollen.

Its subcellular location is the nucleus. It localises to the chromosome. Core component of nucleosome. Nucleosomes wrap and compact DNA into chromatin, limiting DNA accessibility to the cellular machineries which require DNA as a template. Histones thereby play a central role in transcription regulation, DNA repair, DNA replication and chromosomal stability. DNA accessibility is regulated via a complex set of post-translational modifications of histones, also called histone code, and nucleosome remodeling. The polypeptide is Histone H2A.4 (TH254) (Triticum aestivum (Wheat)).